Here is an 81-residue protein sequence, read N- to C-terminus: MKTLLLTLVVVTIVCLDLGYTLKCNQLIPIASKTCPAGKNLCYKMFMMSDLTIPVKRGCIDVCPKNSLLVKYVCCNTDRCN.

A signal peptide spans 1–21; the sequence is MKTLLLTLVVVTIVCLDLGYT. 4 disulfide bridges follow: C24-C42, C35-C59, C63-C74, and C75-C80.

Belongs to the three-finger toxin family. Short-chain subfamily. Type IA cytotoxin sub-subfamily. In terms of assembly, monomer in solution; Homodimer and oligomer in the presence of negatively charged lipids forming a pore with a size ranging between 20 and 30 Angstroms. In terms of tissue distribution, expressed by the venom gland.

The protein localises to the secreted. It is found in the target cell membrane. Its function is as follows. Shows cytolytic activity on many different cells by forming pore in lipid membranes. In vivo, increases heart rate or kills the animal by cardiac arrest. In addition, it binds to heparin with high affinity, interacts with Kv channel-interacting protein 1 (KCNIP1) in a calcium-independent manner, and binds to integrin alpha-V/beta-3 (ITGAV/ITGB3) with moderate affinity. This Naja atra (Chinese cobra) protein is Cytotoxin 1d/1e.